The chain runs to 571 residues: Double-stranded RNA-binding protein Staufen homolog 2 (571 aa).

One can recognise a DRBM 1 domain in the interval 8–75; it reads TPMCLVNELA…ANKALTESTL (68 aa). Phosphoserine occurs at positions 9 and 13. Arg18 is modified (phosphothreonine). The residue at position 21 (Ser21) is a Phosphoserine. Disordered stretches follow at residues 71-94 and 178-203; these read TEST…PGSI and ALQN…DDKD. Residues 83 to 94 are compositionally biased toward polar residues; it reads PKSNVNNNPGSI. Residues 95-181 enclose the DRBM 2 domain; sequence TPTVELNGLA…AMKALQALQN (87 aa). A Phosphoserine modification is found at Ser188. The span at 194–203 shows a compositional bias: basic and acidic residues; sequence SGKEMDDDKD. 2 DRBM domains span residues 207-274 and 307-375; these read SEIS…ELKK and NPIS…QLGY. 2 consecutive short sequence motifs (nuclear localization signal) follow at residues 273–317 and 373–412; these read KKLP…QIQQ and LGYK…PKGI. A required for dendritic transport region spans residues 381-571; the sequence is LQDQLDKTGE…QDCKKSKSVI (191 aa). A disordered region spans residues 382–413; sequence QDQLDKTGENKGWSGPKPGFPEPANNTPKGIL. A phosphoserine mark is found at Ser395, Ser416, Ser426, Ser440, Ser456, and Ser493. The interval 546-571 is disordered; that stretch reads LREKADNNQANPGSITQDCKKSKSVI. Polar residues predominate over residues 552 to 562; the sequence is NNQANPGSITQ.

As to quaternary structure, identified in a mRNP complex, at least composed of DHX9, DDX3X, ELAVL1, HNRNPU, IGF2BP1, ILF3, PABPC1, PCBP2, PTBP2, STAU1, STAU2, SYNCRIP and YBX1. Interacts with the exportin XPO5. This requires RNA and RAN bound to GTP. Interacts with microtubules. Isoform 2 and isoform 3 may also interact with ribosomes, and this association is independent of translation. Interacts with TRIM71 (via NHL repeats) in an RNA-dependent manner. As to expression, expressed in both somata and dendrites of hippocampal neurons.

It localises to the nucleus. The protein resides in the nucleolus. The protein localises to the cytoplasm. It is found in the endoplasmic reticulum. Functionally, RNA-binding protein required for the microtubule-dependent transport of neuronal RNA from the cell body to the dendrite. As protein synthesis occurs within the dendrite, the localization of specific mRNAs to dendrites may be a prerequisite for neurite outgrowth and plasticity at sites distant from the cell body. This Rattus norvegicus (Rat) protein is Double-stranded RNA-binding protein Staufen homolog 2 (Stau2).